A 769-amino-acid polypeptide reads, in one-letter code: Non-secreted LysM effector LysM17 (769 aa).

A helical membrane pass occupies residues 173–193; that stretch reads LPPLATAIPLAVVWASLASVI. N-linked (GlcNAc...) asparagine glycans are attached at residues asparagine 305, asparagine 368, asparagine 423, and asparagine 452. LysM domains are found at residues 498–543 and 562–610; these read RTIQ…HVCC and YSNL…KICL. Residues asparagine 631, asparagine 671, asparagine 706, and asparagine 734 are each glycosylated (N-linked (GlcNAc...) asparagine).

The protein belongs to the secreted LysM effector family.

The protein resides in the membrane. In terms of biological role, non-secreted LysM effector that might be involved in manipulation of host defenses for successful infection. The chain is Non-secreted LysM effector LysM17 from Penicillium expansum (Blue mold rot fungus).